Reading from the N-terminus, the 408-residue chain is Chaperone protein dnaJ 1, mitochondrial (408 aa).

Residues 1-26 (MRRFNWVLRHVQARRTFDSAIGLRQG) constitute a mitochondrion transit peptide. Residues 48 to 113 (NYYDVLGVSP…ERREEYDKLQ (66 aa)) enclose the J domain. The CR-type zinc-finger motif lies at 173–247 (GCTKRLSFDA…CRGSGIVEGT (75 aa)). Positions 186, 189, 203, 206, 221, 224, 235, and 238 each coordinate Zn(2+). CXXCXGXG motif repeat units follow at residues 186 to 193 (CDSCDGLG), 203 to 210 (CPTCRGVG), 221 to 228 (CQTCKGTG), and 235 to 242 (CMSCRGSG).

It belongs to the DnaJ family. B/II subfamily. As to quaternary structure, homodimer. The cofactor is Zn(2+). In terms of tissue distribution, ubiquitous.

The protein resides in the mitochondrion. Its function is as follows. Plays a continuous role in plant development probably in the structural organization of compartments. This chain is Chaperone protein dnaJ 1, mitochondrial (ATJ1), found in Arabidopsis thaliana (Mouse-ear cress).